Consider the following 109-residue polypeptide: Putative double-stranded DNA mimic protein plu2488 (109 aa).

This sequence belongs to the putative dsDNA mimic protein family.

Functionally, may act as a double-stranded DNA (dsDNA) mimic. Probably regulates the activity of a dsDNA-binding protein. This Photorhabdus laumondii subsp. laumondii (strain DSM 15139 / CIP 105565 / TT01) (Photorhabdus luminescens subsp. laumondii) protein is Putative double-stranded DNA mimic protein plu2488.